We begin with the raw amino-acid sequence, 940 residues long: Pentatricopeptide repeat-containing protein At5g14770, mitochondrial (940 aa).

Residues 1–24 (MIMIRIWNNYKGKYRFFLSNCRSF) constitute a mitochondrion transit peptide. 24 PPR repeats span residues 59 to 93 (YVSLFHTLFRLYLSCERLYGAARTLSAMCTFGVVP), 94 to 129 (DSRLWNSLIHQFNVNGLVHDQVSLIYSKMIACGVSP), 130 to 161 (DVFALNVLIHSFCKVGRLSFAISLLRNRVISI), 162 to 196 (DTVTYNTVISGLCEHGLADEAYQFLSEMVKMGILP), 197 to 231 (DTVSYNTLIDGFCKVGNFVRAKALVDEISELNLIT), 241 to 259 (NLHAIEEAYRDMVMSGFDP), 260 to 294 (DVVTFSSIINRLCKGGKVLEGGLLLREMEEMSVYP), 295 to 329 (NHVTYTTLVDSLFKANIYRHALALYSQMVVRGIPV), 330 to 364 (DLVVYTVLMDGLFKAGDLREAEKTFKMLLEDNQVP), 365 to 399 (NVVTYTALVDGLCKAGDLSSAEFIITQMLEKSVIP), 400 to 434 (NVVTYSSMINGYVKKGMLEEAVSLLRKMEDQNVVP), 435 to 469 (NGFTYGTVIDGLFKAGKEEMAIELSKEMRLIGVEE), 470 to 504 (NNYILDALVNHLKRIGRIKEVKGLVKDMVSKGVTL), 505 to 539 (DQINYTSLIDVFFKGGDEEAALAWAEEMQERGMPW), 540 to 573 (DVVSYNVLISGMLKFGKVGADWAYKGMREKGIEP), 574 to 608 (DIATFNIMMNSQRKQGDSEGILKLWDKMKSCGIKP), 609 to 643 (SLMSCNIVVGMLCENGKMEEAIHILNQMMLMEIHP), 644 to 678 (NLTTYRIFLDTSSKHKRADAIFKTHETLLSYGIKL), 679 to 713 (SRQVYNTLIATLCKLGMTKKAAMVMGDMEARGFIP), 714 to 748 (DTVTFNSLMHGYFVGSHVRKALSTYSVMMEAGISP), 749 to 783 (NVATYNTIIRGLSDAGLIKEVDKWLSEMKSRGMRP), 784 to 818 (DDFTYNALISGQAKIGNMKGSMTIYCEMIADGLVP), 819 to 853 (KTSTYNVLISEFANVGKMLQARELLKEMGKRGVSP), and 854 to 891 (NTSTYCTMISGLCKLCTHPDVEWNKKAMYLAEAKGLLK).

Belongs to the PPR family. P subfamily.

It is found in the mitochondrion. The polypeptide is Pentatricopeptide repeat-containing protein At5g14770, mitochondrial (Arabidopsis thaliana (Mouse-ear cress)).